Reading from the N-terminus, the 344-residue chain is MIKVGIVGGTGYTGVELLRLLAQHPQAEVAVITSRSEAGVAVADMYPNLRGHYDGLAFSVPDSKALSACDVVFFATPHGVAHALAGELLAAGTKVIDLSADFRLQDAAEWAKWYGQPHGAPELLKDAVYGLPEVNREKIRLARLIAVPGCYPTATQLGFLPLLEAGLADPSRLIADCKSGVSGAGRGAAVGSLFCEAGESMKAYAVKGHRHLPEISQGLRLAAGTDIGLTFVPHLTPMIRGIHSTLYATVADKSVDLQALFEKRYADEPFVDVMPAGSHPETRSVRGANVCRIAVHRPQGGDLVVVLSVIDNLVKGASGQAVQNLNILFGLDERMGLSHAGLLP.

Cys150 is a catalytic residue.

It belongs to the NAGSA dehydrogenase family. Type 1 subfamily.

The protein resides in the cytoplasm. It catalyses the reaction N-acetyl-L-glutamate 5-semialdehyde + phosphate + NADP(+) = N-acetyl-L-glutamyl 5-phosphate + NADPH + H(+). It functions in the pathway amino-acid biosynthesis; L-arginine biosynthesis; N(2)-acetyl-L-ornithine from L-glutamate: step 3/4. In terms of biological role, catalyzes the NADPH-dependent reduction of N-acetyl-5-glutamyl phosphate to yield N-acetyl-L-glutamate 5-semialdehyde. This Pseudomonas putida (strain W619) protein is N-acetyl-gamma-glutamyl-phosphate reductase.